A 140-amino-acid polypeptide reads, in one-letter code: Large ribosomal subunit protein uL16 (140 aa).

This sequence belongs to the universal ribosomal protein uL16 family. In terms of assembly, part of the 50S ribosomal subunit.

Its function is as follows. Binds 23S rRNA and is also seen to make contacts with the A and possibly P site tRNAs. This chain is Large ribosomal subunit protein uL16, found in Cytophaga hutchinsonii (strain ATCC 33406 / DSM 1761 / CIP 103989 / NBRC 15051 / NCIMB 9469 / D465).